The primary structure comprises 321 residues: Cysteine and histidine-rich domain-containing protein 1 (321 aa).

Residues Cys9, Cys14, Cys28, His31, Cys46, Cys47, Cys63, His68, Cys152, Cys157, Cys170, His173, Cys188, Cys189, Cys205, and His210 each coordinate Zn(2+). CHORD domains follow at residues 9–68 (CYHK…RGKH) and 152–210 (CRNN…SGEH). A CS domain is found at 218-308 (VSKFREDWFS…KHGTGWPRLK (91 aa)).

In terms of biological role, regulates centrosome duplication. Controls the secretion of the tyrosine kinase receptor let-23/EGFR from the endoplasmic reticulum and is required for the localization of let-23/EGFR to the plasma membrane of vulval precursor cells. It thus plays a role in positively regulating let/EGFR signaling, and anchor cell and vulval precursor cell alignment. Plays a role in vulval development and morphogenesis. The protein is Cysteine and histidine-rich domain-containing protein 1 of Caenorhabditis elegans.